The chain runs to 304 residues: Acetyl-coenzyme A carboxylase carboxyl transferase subunit beta (304 aa).

The CoA carboxyltransferase N-terminal domain maps to 26–295; the sequence is VWTKCTSCEQ…PFVEPELVEN (270 aa). Zn(2+)-binding residues include cysteine 30, cysteine 33, cysteine 49, and cysteine 52. Residues 30 to 52 form a C4-type zinc finger; the sequence is CTSCEQVLYRDELRRHLEVCPKC. The segment at 281-304 is disordered; it reads SNKPSPFVEPELVENEEQSKSDNE.

Belongs to the AccD/PCCB family. As to quaternary structure, acetyl-CoA carboxylase is a heterohexamer composed of biotin carboxyl carrier protein (AccB), biotin carboxylase (AccC) and two subunits each of ACCase subunit alpha (AccA) and ACCase subunit beta (AccD). Zn(2+) is required as a cofactor.

Its subcellular location is the cytoplasm. It carries out the reaction N(6)-carboxybiotinyl-L-lysyl-[protein] + acetyl-CoA = N(6)-biotinyl-L-lysyl-[protein] + malonyl-CoA. The protein operates within lipid metabolism; malonyl-CoA biosynthesis; malonyl-CoA from acetyl-CoA: step 1/1. Its function is as follows. Component of the acetyl coenzyme A carboxylase (ACC) complex. Biotin carboxylase (BC) catalyzes the carboxylation of biotin on its carrier protein (BCCP) and then the CO(2) group is transferred by the transcarboxylase to acetyl-CoA to form malonyl-CoA. The sequence is that of Acetyl-coenzyme A carboxylase carboxyl transferase subunit beta from Pasteurella multocida (strain Pm70).